Here is a 180-residue protein sequence, read N- to C-terminus: Anaerobic nitrite reductase GLB0 (180 aa).

Positions 23-172 (TYSKENEQLV…LAEQVKAEMH (150 aa)) constitute a Globin domain. Residues 56–60 (EIAPG) carry the Homodimerization motif. Positions 66, 80, 84, 114, 118, and 119 each coordinate heme b. Residues 126–138 (DDQFEIVKEAILY) carry the Homodimerization motif.

It belongs to the plant globin family. In terms of assembly, homodimer. It depends on heme b as a cofactor.

Its subcellular location is the cytoplasm. The protein localises to the nucleus. It catalyses the reaction Fe(III)-heme b-[protein] + nitric oxide + H2O = Fe(II)-heme b-[protein] + nitrite + 2 H(+). Its function is as follows. Phytoglobin that reduces nitrite to nitric oxide (NO) under anoxic conditions (e.g. during flooding or in waterlogged soil). May not function as an oxygen storage or transport protein. Has an unusually high affinity for O(2) through an hexacoordinate heme iron because of a very low dissociation constant. The polypeptide is Anaerobic nitrite reductase GLB0 (Physcomitrium patens (Spreading-leaved earth moss)).